Consider the following 190-residue polypeptide: GTP cyclohydrolase 1 (190 aa).

Zn(2+) contacts are provided by C75, H78, and C146.

Belongs to the GTP cyclohydrolase I family. As to quaternary structure, homomer.

The enzyme catalyses GTP + H2O = 7,8-dihydroneopterin 3'-triphosphate + formate + H(+). The protein operates within cofactor biosynthesis; 7,8-dihydroneopterin triphosphate biosynthesis; 7,8-dihydroneopterin triphosphate from GTP: step 1/1. This Campylobacter lari (strain RM2100 / D67 / ATCC BAA-1060) protein is GTP cyclohydrolase 1.